The following is a 217-amino-acid chain: Photosynthetic NDH subunit of lumenal location 4, chloroplastic (217 aa).

Residues 1-34 (MAISTLTLTQSLYTRSFRPTIFFSSSSSSSFSCL) constitute a chloroplast transit peptide. 2 cysteine pairs are disulfide-bonded: C87–C99 and C188–C193. Residues 112–211 (GVLVNIHYTA…LYDINFVEIY (100 aa)) form the PPIase FKBP-type domain.

It belongs to the FKBP-type PPIase family. In terms of assembly, part of the chloroplast NDH complex, composed of a mixture of chloroplast and nucleus encoded subunits. Component of the NDH lumenal subcomplex, at least composed of PnsL1, PnsL2, PnsL3, PnsL4 and PnsL5.

Its subcellular location is the plastid. It localises to the chloroplast thylakoid lumen. The catalysed reaction is [protein]-peptidylproline (omega=180) = [protein]-peptidylproline (omega=0). In terms of biological role, NDH shuttles electrons from NAD(P)H:plastoquinone, via FMN and iron-sulfur (Fe-S) centers, to quinones in the photosynthetic chain and possibly in a chloroplast respiratory chain. The immediate electron acceptor for the enzyme in this species is believed to be plastoquinone. Couples the redox reaction to proton translocation, and thus conserves the redox energy in a proton gradient. PPIases accelerate the folding of proteins. It catalyzes the cis-trans isomerization of proline imidic peptide bonds in oligopeptides. Seems to be essential for stabilizing the NDH subcomplex A. This is Photosynthetic NDH subunit of lumenal location 4, chloroplastic from Arabidopsis thaliana (Mouse-ear cress).